Consider the following 424-residue polypeptide: Myb family transcription factor RLI1 (424 aa).

The disordered stretch occupies residues 144–165 (RPQKRDSGERTPLPPPSQQQHQ). One can recognise an HTH myb-type domain in the interval 238-298 (APSKTRIRWT…HLQKYRIAKY (61 aa)). The H-T-H motif DNA-binding region spans 269-294 (PKGILKLMNSDGLTIYHIKSHLQKYR). Positions 342 to 347 (LHEQLE) match the LHEQLE motif. A coiled-coil region spans residues 342 to 391 (LHEQLEIQRNLQLRIEEQGKRLQKMFEDQLKASRSVMEPQELDDVVAFAA).

The protein belongs to the MYB-CC family. In terms of assembly, homodimer. Interacts with PHR2 in the nucleus. Interacts with SPX1 and SPX2 in the nucleus; these interactions prevent binding to the promoters of target genes, thus regulating negatively leaf inclination in response to phosphate (Pi) starvation.

It is found in the nucleus. Its function is as follows. Transcription factor binding to specific DNA sequences of target genes promoters, such as the motif R1BS 5'-NAKATNCN-3' and the motif P1BS 5'-GNATATNC-3' to trigger their expression. Nitrate-induced component involved in modulating phosphate (Pi) response and homeostasis together with PHR2; activates directly the expression of Pi starvation-induced (PSI) genes upon nitrate disponibility, thus triggering the nitrate-induced phosphate response (NIPR) promoting Pi uptake activity. Involved in the shoot architecture; positively regulates leaf inclination by affecting lamina joint cell elongation via the direct promotion of ILI4/BU1 and BC1 genes expression, especially in response to phosphate (Pi) availability. Regulates both brassinolide (BL) biosynthesis and signaling by directly activating BL-biosynthesis and signaling genes. The protein is Myb family transcription factor RLI1 of Oryza sativa subsp. indica (Rice).